Here is a 176-residue protein sequence, read N- to C-terminus: MKPVIDIAVEAEAWESFEDPATLAETVIVQTISQSGAKLAAEAEISIVFCDDAFIADLNRKWRGVDKPTNVLSFPSGGPIAVTPVLGDIVIAYETTEREAQEAGKPFRDHVAHLIAHGFLHLIGYDHLAAADAEAMEALERSVLARLGIDDPYQEPLASVEDGLAPVKGPLTSVKE.

Residues His-117, His-121, and His-127 each coordinate Zn(2+).

Belongs to the endoribonuclease YbeY family. Zn(2+) serves as cofactor.

The protein localises to the cytoplasm. Single strand-specific metallo-endoribonuclease involved in late-stage 70S ribosome quality control and in maturation of the 3' terminus of the 16S rRNA. The protein is Endoribonuclease YbeY of Methylocella silvestris (strain DSM 15510 / CIP 108128 / LMG 27833 / NCIMB 13906 / BL2).